The chain runs to 130 residues: Small ribosomal subunit protein uS11 (130 aa).

It belongs to the universal ribosomal protein uS11 family. Part of the 30S ribosomal subunit. Interacts with proteins S7 and S18. Binds to IF-3.

Functionally, located on the platform of the 30S subunit, it bridges several disparate RNA helices of the 16S rRNA. Forms part of the Shine-Dalgarno cleft in the 70S ribosome. The protein is Small ribosomal subunit protein uS11 of Teredinibacter turnerae (strain ATCC 39867 / T7901).